The chain runs to 246 residues: rRNA methyltransferase 2, mitochondrial (246 aa).

The N-terminal 18 residues, 1–18 (MAGYLKLVCVSFQRQGFH), are a transit peptide targeting the mitochondrion. S-adenosyl-L-methionine contacts are provided by residues 83 to 86 (PGAW), Asp112, 129 to 130 (DV), and Asp154. Residue Lys194 is the Proton acceptor of the active site.

Belongs to the class I-like SAM-binding methyltransferase superfamily. RNA methyltransferase RlmE family. As to expression, widely expressed, with highest expression in muscle, placenta, and heart.

It is found in the mitochondrion. It carries out the reaction uridine(1369) in 16S rRNA + S-adenosyl-L-methionine = 2'-O-methyluridine(1369) in 16S rRNA + S-adenosyl-L-homocysteine + H(+). S-adenosyl-L-methionine-dependent 2'-O-ribose methyltransferase that catalyzes the formation of 2'-O-methyluridine at position 1369 (Um1369) in the 16S mitochondrial large subunit ribosomal RNA (mtLSU rRNA), a universally conserved modification in the peptidyl transferase domain of the mtLSU rRNA. This activity may require prior 2'-O-methylguanosine modification at position 1370 (Gm1370) by MRM3. Essential for late-stage assembly of mtLSU required for efficient translation of mitochondrial DNA encoded proteins; methyltransferase activity is not required for this function. Essential for mitochondrial respiratory function. This chain is rRNA methyltransferase 2, mitochondrial, found in Homo sapiens (Human).